The chain runs to 455 residues: Adenylyltransferase and sulfurtransferase UBA4 (455 aa).

Residues Gly-93, Asp-114, 121–125 (SNLHR), Lys-138, and 182–183 (DH) contribute to the ATP site. The Zn(2+) site is built by Cys-224 and Cys-227. The Glycyl thioester intermediate; for adenylyltransferase activity role is filled by Cys-241. Cys-302 and Cys-305 together coordinate Zn(2+). The 99-residue stretch at 355-453 (QSREHTLIDV…WSEDIDAAFP (99 aa)) folds into the Rhodanese domain. The active-site Cysteine persulfide intermediate; for sulfurtransferase activity is Cys-413.

It in the N-terminal section; belongs to the HesA/MoeB/ThiF family. UBA4 subfamily. Requires Zn(2+) as cofactor.

The protein localises to the cytoplasm. It is found in the cytosol. It functions in the pathway tRNA modification; 5-methoxycarbonylmethyl-2-thiouridine-tRNA biosynthesis. Its function is as follows. Plays a central role in 2-thiolation of mcm(5)S(2)U at tRNA wobble positions of cytosolic tRNA(Lys), tRNA(Glu) and tRNA(Gln). Acts by mediating the C-terminal thiocarboxylation of sulfur carrier URM1. Its N-terminus first activates URM1 as acyl-adenylate (-COAMP), then the persulfide sulfur on the catalytic cysteine is transferred to URM1 to form thiocarboxylation (-COSH) of its C-terminus. The reaction probably involves hydrogen sulfide that is generated from the persulfide intermediate and that acts as a nucleophile towards URM1. Subsequently, a transient disulfide bond is formed. Does not use thiosulfate as sulfur donor; NFS1 probably acting as a sulfur donor for thiocarboxylation reactions. Prior mcm(5) tRNA modification by the elongator complex is required for 2-thiolation. May also be involved in protein urmylation. This is Adenylyltransferase and sulfurtransferase UBA4 from Lodderomyces elongisporus (strain ATCC 11503 / CBS 2605 / JCM 1781 / NBRC 1676 / NRRL YB-4239) (Yeast).